We begin with the raw amino-acid sequence, 252 residues long: Spermatogenesis-associated protein 9 (252 aa).

The chain crosses the membrane as a helical span at residues 145–167; the sequence is TSIMYASYAALIYLAVCVNAVLA. The segment covering 208-221 has biased composition (basic and acidic residues); it reads KAKPYRSLPEKPDN. The segment at 208–235 is disordered; sequence KAKPYRSLPEKPDNLLDQPKPPANKQSN.

It localises to the membrane. May play at role in testicular development/spermatogenesis and may be an important factor in male infertility. In Mus musculus (Mouse), this protein is Spermatogenesis-associated protein 9 (Spata9).